The chain runs to 448 residues: Vitamin D3 receptor (448 aa).

The segment at residues 41 to 116 (PRICGVCGDR…IGMMKEFILT (76 aa)) is a DNA-binding region (nuclear receptor). Residues Cys44, Cys47, Cys61, Cys64, Cys80, Cys86, Cys96, and Cys99 each coordinate Zn(2+). 2 consecutive NR C4-type zinc fingers follow at residues 44-64 (CGVC…CEGC) and 80-104 (CPFS…LKRC). The segment at 117–146 (DEEVQRKREMILKRKEEEALKESLKPKLSE) is hinge. Positions 147 to 444 (EQQKVINILL…LTPLVLEVFG (298 aa)) constitute an NR LBD domain. Residue Ser258 participates in calcitriol binding. The tract at residues 267–285 (KMIPGFRDLTAEDQIALLK) is interaction with coactivator LXXLL motif. Arg295, Ser299, His326, and His418 together coordinate calcitriol. Residues 437–445 (PLVLEVFGN) carry the 9aaTAD motif.

It belongs to the nuclear hormone receptor family. NR1 subfamily. In terms of assembly, homodimer in the absence of bound vitamin D3. Heterodimer with RXRA after vitamin D3 binding.

It localises to the nucleus. The protein resides in the cytoplasm. Its function is as follows. Nuclear receptor for calcitriol, the active form of vitamin D3 which mediates the action of this vitamin on cells. Enters the nucleus upon vitamin D3 binding where it forms heterodimers with the retinoid X receptor/RXR. The VDR-RXR heterodimers bind to specific response elements on DNA and activate the transcription of vitamin D3-responsive target genes. Plays a central role in calcium homeostasis. Also functions as a receptor for the secondary bile acid lithocholic acid (LCA) and its metabolites. This Coturnix japonica (Japanese quail) protein is Vitamin D3 receptor (VDR).